The chain runs to 50 residues: Sperm protamine P1 (50 aa).

It belongs to the protamine P1 family. Testis.

It localises to the nucleus. Its subcellular location is the chromosome. In terms of biological role, protamines substitute for histones in the chromatin of sperm during the haploid phase of spermatogenesis. They compact sperm DNA into a highly condensed, stable and inactive complex. The protein is Sperm protamine P1 (PRM1) of Chilonatalus micropus (Cuban funnel-eared bat).